We begin with the raw amino-acid sequence, 49 residues long: MRVKVALKCSQCGNKNYYTTRNKDKRAKLELRKYCPKCNAHTIHTETKA.

Belongs to the bacterial ribosomal protein bL33 family.

The protein is Large ribosomal subunit protein bL33 (rpmG) of Thermotoga maritima (strain ATCC 43589 / DSM 3109 / JCM 10099 / NBRC 100826 / MSB8).